The following is a 433-amino-acid chain: MAKIVKVIGREIIDSRGNPTVEAEVHLEGGFVGLAAAPSGASTGSREALELRDGDKSRFLGKGVLKAVSAVNNEIAQAVVGKDASNQAEIDQIMIDLDGTDNKSKFGANAILAVSLANAKAAAASKGLPLYAYIAELNGTPGQYSMPLPMMNIINGGEHADNNVDIQEFMIQPVGAKTLREAVRIGSEVFHNLAKVLKAKGYNTAVGDEGGFAPNLGSNAEALACIKEAVEKAGYTLGKDVTLAMDCASSEFYNKETGKYEMKGEGRSFTSQEFTHYLEELCKQYPIVSIEDGQDESDWDGFAYQTKVLGDNVQLVGDDLFVTNTKILKEGIEKGIANSILIKFNQIGSLTETLAAIKMAKDAGYTAVISHRSGETEDATIADLAVGTAAGQIKTGSMSRSDRVAKYNQLIRIEEALGDKAPFLGLKAVKGQA.

Gln-167 is a binding site for (2R)-2-phosphoglycerate. Residue Glu-209 is the Proton donor of the active site. Residues Asp-246, Glu-291, and Asp-318 each coordinate Mg(2+). Lys-343, Arg-372, Ser-373, and Lys-394 together coordinate (2R)-2-phosphoglycerate. The active-site Proton acceptor is the Lys-343.

The protein belongs to the enolase family. In terms of assembly, component of the RNA degradosome, a multiprotein complex involved in RNA processing and mRNA degradation. It depends on Mg(2+) as a cofactor.

Its subcellular location is the cytoplasm. It localises to the secreted. The protein localises to the cell surface. It carries out the reaction (2R)-2-phosphoglycerate = phosphoenolpyruvate + H2O. It functions in the pathway carbohydrate degradation; glycolysis; pyruvate from D-glyceraldehyde 3-phosphate: step 4/5. Catalyzes the reversible conversion of 2-phosphoglycerate (2-PG) into phosphoenolpyruvate (PEP). It is essential for the degradation of carbohydrates via glycolysis. The sequence is that of Enolase from Actinobacillus succinogenes (strain ATCC 55618 / DSM 22257 / CCUG 43843 / 130Z).